A 442-amino-acid chain; its full sequence is Mitochondrial distribution and morphology protein 12 (442 aa).

The SMP-LTD domain maps to 1-442 (MSIDINWEAA…VYPSFWTFLV (442 aa)). Disordered stretches follow at residues 67 to 125 (NDFY…RVGY), 202 to 277 (LSLA…RRMR), and 364 to 387 (EGYH…RRSN). Residues 69-80 (FYEEDEDGEDLS) are compositionally biased toward acidic residues. Residues 90–100 (PSSQGLSQSTP) show a composition bias toward polar residues. A compositionally biased stretch (low complexity) spans 101-112 (NGDAGSSNSSSN). Residues 213–222 (RQRERARSSD) are compositionally biased toward basic and acidic residues. The span at 227–245 (SPQSRSRPSTSSTRQRTST) shows a compositional bias: low complexity.

The protein belongs to the MDM12 family. In terms of assembly, component of the ER-mitochondria encounter structure (ERMES) or MDM complex, composed of MMM1, MDM10, MDM12 and MDM34. An MMM1 homodimer associates with one molecule of MDM12 on each side in a pairwise head-to-tail manner, and the SMP-LTD domains of MMM1 and MDM12 generate a continuous hydrophobic tunnel for phospholipid trafficking.

The protein resides in the mitochondrion outer membrane. It localises to the endoplasmic reticulum membrane. In terms of biological role, component of the ERMES/MDM complex, which serves as a molecular tether to connect the endoplasmic reticulum (ER) and mitochondria. Components of this complex are involved in the control of mitochondrial shape and protein biogenesis, and function in nonvesicular lipid trafficking between the ER and mitochondria. MDM12 is required for the interaction of the ER-resident membrane protein MMM1 and the outer mitochondrial membrane-resident beta-barrel protein MDM10. The MDM12-MMM1 subcomplex functions in the major beta-barrel assembly pathway that is responsible for biogenesis of all mitochondrial outer membrane beta-barrel proteins, and acts in a late step after the SAM complex. The MDM10-MDM12-MMM1 subcomplex further acts in the TOM40-specific pathway after the action of the MDM12-MMM1 complex. Essential for establishing and maintaining the structure of mitochondria and maintenance of mtDNA nucleoids. The chain is Mitochondrial distribution and morphology protein 12 from Arthroderma otae (strain ATCC MYA-4605 / CBS 113480) (Microsporum canis).